The sequence spans 297 residues: Cell death peptidase (297 aa).

A run of 2 helical transmembrane segments spans residues 61 to 82 and 149 to 178; these read IVLT…WVFT and IFLC…AFST.

It belongs to the peptidase U49 family.

It is found in the cell membrane. In terms of biological role, interacts with a short DNA sequence about one-quarter of the way into the major capsid protein gene 23 of T4; general translation inhibition occurs when this late gene of the virus is expressed. This Escherichia coli (strain K12) protein is Cell death peptidase (lit).